Here is a 128-residue protein sequence, read N- to C-terminus: Ribonuclease P protein component (128 aa).

The protein belongs to the RnpA family. Consists of a catalytic RNA component (M1 or rnpB) and a protein subunit.

The enzyme catalyses Endonucleolytic cleavage of RNA, removing 5'-extranucleotides from tRNA precursor.. RNaseP catalyzes the removal of the 5'-leader sequence from pre-tRNA to produce the mature 5'-terminus. It can also cleave other RNA substrates such as 4.5S RNA. The protein component plays an auxiliary but essential role in vivo by binding to the 5'-leader sequence and broadening the substrate specificity of the ribozyme. The sequence is that of Ribonuclease P protein component from Prochlorococcus marinus (strain MIT 9215).